The primary structure comprises 490 residues: Adenylosuccinate lyase (490 aa).

Ala-2 is modified (N-acetylalanine). Substrate contacts are provided by residues 26 to 27 (RY), 91 to 93 (RHD), and 117 to 118 (TS). Lys-153 bears the N6-acetyllysine mark. The active-site Proton donor/acceptor is His-165. Gln-247 contributes to the substrate binding site. Ser-295 (proton donor/acceptor) is an active-site residue. Position 301 is an N6-acetyllysine (Lys-301). Residues Arg-309, Arg-335, Ser-340, and Arg-344 each contribute to the substrate site. A Glycyl lysine isopeptide (Lys-Gly) (interchain with G-Cter in SUMO1) cross-link involves residue Lys-421.

It belongs to the lyase 1 family. Adenylosuccinate lyase subfamily. As to quaternary structure, homotetramer. Residues from neighboring subunits contribute catalytic and substrate-binding residues to each active site.

The enzyme catalyses N(6)-(1,2-dicarboxyethyl)-AMP = fumarate + AMP. The catalysed reaction is (2S)-2-[5-amino-1-(5-phospho-beta-D-ribosyl)imidazole-4-carboxamido]succinate = 5-amino-1-(5-phospho-beta-D-ribosyl)imidazole-4-carboxamide + fumarate. The protein operates within purine metabolism; AMP biosynthesis via de novo pathway; AMP from IMP: step 2/2. Its pathway is purine metabolism; IMP biosynthesis via de novo pathway; 5-amino-1-(5-phospho-D-ribosyl)imidazole-4-carboxamide from 5-amino-1-(5-phospho-D-ribosyl)imidazole-4-carboxylate: step 2/2. Its function is as follows. Catalyzes two non-sequential steps in de novo AMP synthesis: converts (S)-2-(5-amino-1-(5-phospho-D-ribosyl)imidazole-4-carboxamido)succinate (SAICAR) to fumarate plus 5-amino-1-(5-phospho-D-ribosyl)imidazole-4-carboxamide, and thereby also contributes to de novo IMP synthesis, and converts succinyladenosine monophosphate (SAMP) to AMP and fumarate. The polypeptide is Adenylosuccinate lyase (ADSL) (Bos taurus (Bovine)).